Consider the following 239-residue polypeptide: Probable transcriptional regulator ycf27 (239 aa).

The Response regulatory domain maps to 7-120; it reads KILVVDDEIS…ELEARIRSLL (114 aa). Aspartate 56 carries the 4-aspartylphosphate modification. A DNA-binding region (H-T-H motif) is located at residues 76-94; that stretch reads DIPIIMLTALGDVADRITG. Residues 135-236 constitute a DNA-binding region (ompR/PhoB-type); that stretch reads GENLQIGFLK…ARGIGYLFQN (102 aa).

It is found in the plastid. The protein resides in the cyanelle. Functionally, probable promoter-specific protein mediating the interaction between DNA and RNA polymerase. In Cyanophora paradoxa, this protein is Probable transcriptional regulator ycf27 (ycf27).